Here is a 363-residue protein sequence, read N- to C-terminus: GTPase Obg (363 aa).

Residues 1–159 (MKFVDEAFID…KSLKLELKVL (159 aa)) form the Obg domain. The 182-residue stretch at 160 to 341 (ADVGLLGRPN…LVHAIFGHVQ (182 aa)) folds into the OBG-type G domain. GTP-binding positions include 166 to 173 (GRPNAGKS), 191 to 195 (FTTLH), 213 to 216 (DIPG), 291 to 294 (NKLD), and 322 to 324 (SAL). Mg(2+)-binding residues include Ser173 and Thr193. The segment at 343 to 363 (GQRMDNEPPPLDPRFASAGPA) is disordered.

It belongs to the TRAFAC class OBG-HflX-like GTPase superfamily. OBG GTPase family. In terms of assembly, monomer. Mg(2+) is required as a cofactor.

The protein resides in the cytoplasm. Its function is as follows. An essential GTPase which binds GTP, GDP and possibly (p)ppGpp with moderate affinity, with high nucleotide exchange rates and a fairly low GTP hydrolysis rate. Plays a role in control of the cell cycle, stress response, ribosome biogenesis and in those bacteria that undergo differentiation, in morphogenesis control. The sequence is that of GTPase Obg from Verminephrobacter eiseniae (strain EF01-2).